The chain runs to 366 residues: Patr class I histocompatibility antigen, C alpha chain (366 aa).

The signal sequence occupies residues 1-24 (MRVTAPRTLLLLLSGGLALTETWA). The alpha-1 stretch occupies residues 25–114 (GSHSLRYFDT…LRGYYNQSED (90 aa)). Topologically, residues 25-308 (GSHSLRYFDT…KPTSQPTIPI (284 aa)) are extracellular. N-linked (GlcNAc...) asparagine glycosylation occurs at Asn110. Residues 115–206 (GSHTLQWMYG…ENGKETLQRT (92 aa)) form an alpha-2 region. Intrachain disulfides connect Cys125/Cys192 and Cys227/Cys283. Positions 207–298 (ECPKTHMTHH…GLPEPLTLRW (92 aa)) are alpha-3. In terms of domain architecture, Ig-like C1-type spans 209 to 297 (PKTHMTHHPV…EGLPEPLTLR (89 aa)). The segment at 299-308 (KPTSQPTIPI) is connecting peptide. The chain crosses the membrane as a helical span at residues 309 to 332 (VGIVAGLAVLAVLAVLGAVVTAMM). The Cytoplasmic segment spans residues 333-366 (CRRKSSGGKGGSCSQAACSNSAQGSDESLIACKA). Phosphoserine is present on residues Ser357 and Ser360.

It belongs to the MHC class I family. In terms of assembly, heterodimer of an alpha chain and a beta chain (beta-2-microglobulin).

The protein resides in the membrane. Its function is as follows. Involved in the presentation of foreign antigens to the immune system. This Pan troglodytes (Chimpanzee) protein is Patr class I histocompatibility antigen, C alpha chain.